The primary structure comprises 227 residues: Urease subunit gamma/beta (227 aa).

A urease gamma region spans residues 1–101; the sequence is MRLTPTERDR…LAVVADPVGG (101 aa). The urease beta stretch occupies residues 102–227; it reads GGLGDDAPGA…AACGYLGADR (126 aa).

This sequence in the N-terminal section; belongs to the urease gamma subunit family. The protein in the C-terminal section; belongs to the urease beta subunit family. In terms of assembly, heterohexamer of 3 UreC (alpha) and 3 UreAB (gamma/beta) subunits.

The protein resides in the cytoplasm. It catalyses the reaction urea + 2 H2O + H(+) = hydrogencarbonate + 2 NH4(+). It functions in the pathway nitrogen metabolism; urea degradation; CO(2) and NH(3) from urea (urease route): step 1/1. This Streptomyces coelicolor (strain ATCC BAA-471 / A3(2) / M145) protein is Urease subunit gamma/beta.